The primary structure comprises 648 residues: Acyl-CoA-binding domain-containing protein 5 (648 aa).

Residues 13–107 form the ACB domain; it reads YPERFYAAAS…LEEADPGWYP (95 aa). An acyl-CoA contacts are provided by residues Lys-34, 49 to 53, and Lys-75; that span reads YTLHQ. Kelch repeat units follow at residues 196–244, 256–306, 307–357, 359–408, 409–457, and 464–509; these read KMYM…KLTH, QLLS…LVGK, SLVI…VHAE, YLLI…TIGE, NWYI…LVVS, and IVVA…AVNN. Ser-517 bears the Phosphoserine mark. Residues 520–632 are a coiled coil; sequence KVEGKADRII…AATMNAKRQS (113 aa). The segment covering 625-634 has biased composition (polar residues); the sequence is TMNAKRQSSG. Positions 625–648 are disordered; that stretch reads TMNAKRQSSGGVWGWLAGTPPPKT.

The protein belongs to the ACBP family. Expressed in roots, stems, leaves, flowers and siliques.

The protein localises to the cytoplasm. Binds medium- and long-chain acyl-CoA esters with very high affinity. Can interact in vitro with oleoyl-CoA, barely with palmitoyl-CoA, but not with arachidonyl-CoA. May function as an intracellular carrier of acyl-CoA esters. The chain is Acyl-CoA-binding domain-containing protein 5 (ACBP5) from Arabidopsis thaliana (Mouse-ear cress).